Consider the following 186-residue polypeptide: Elongation factor P (186 aa).

It belongs to the elongation factor P family.

The protein localises to the cytoplasm. The protein operates within protein biosynthesis; polypeptide chain elongation. Its function is as follows. Involved in peptide bond synthesis. Stimulates efficient translation and peptide-bond synthesis on native or reconstituted 70S ribosomes in vitro. Probably functions indirectly by altering the affinity of the ribosome for aminoacyl-tRNA, thus increasing their reactivity as acceptors for peptidyl transferase. In Prochlorococcus marinus (strain MIT 9211), this protein is Elongation factor P.